The chain runs to 382 residues: MIQDQANDLLAMKKTFTKSKWKPEEDRILKDYVIQYGDRTWTHVPKRTGLPHNPASCRFRWMNHLKPSLKKGPFTDEEEKRVLQLHAVLGNKWSQMAREFPGRTDNEIKNFWNARRMRLKGKGLPVYPDEVREQAIRTAAQYGVKVELLNAHYSQDSLMAGNVEKPQELNNLALNQCSPYYQSTLANVQPSRNRVMEPETTFPFTGGSAMNEQNPTLLCNPYVESTQEQLPDSHLFGNVTYSSPPMPLIHEVENLELPSFQGFDFHEEPSSFGAEQYNPMLNLEPHNTLVQSPLIGQTPTDFPSSFYDELLDELLESVVNGSLGEIPKTDTSSESQLFQSSLRSHTDATPDIANTTGYVGSNERNTTNDDDWIRLLLDEGFI.

2 HTH myb-type domains span residues 13–69 and 70–120; these read KKTF…KPSL and KKGP…MRLK. DNA-binding regions (H-T-H motif) lie at residues 41–65 and 93–116; these read WTHVPKRTGLPHNPASCRFRWMNHL and WSQMAREFPGRTDNEIKNFWNARR. Residues 326 to 364 are disordered; it reads IPKTDTSSESQLFQSSLRSHTDATPDIANTTGYVGSNER. Polar residues-rich tracts occupy residues 329-343 and 352-364; these read TDTSSESQLFQSSLR and IANTTGYVGSNER.

The protein resides in the nucleus. The polypeptide is Transcription factor MYB104 (MYB104) (Arabidopsis thaliana (Mouse-ear cress)).